We begin with the raw amino-acid sequence, 300 residues long: Oxidoreductase BOA1 (300 aa).

This sequence belongs to the NmrA-type oxidoreductase family. Isoflavone reductase subfamily.

Its pathway is polyketide biosynthesis. Oxidoreductase; part of the gene cluster A that mediates the biosynthesis of botcinic acid and its botcinin derivatives, acetate-derived polyketides that contribute to virulence when combined with the sesquiterpene botrydial. Botcinic acid and its derivatives have been shown to induce chlorosis and necrosis during host plant infection, but also have antifungal activities. Two polyketide synthases, BOA6 and BOA9, are involved in the biosynthesis of botcinins. BOA6 mediates the formation of the per-methylated tetraketide core by condensation of four units of malonyl-CoA with one unit of acetyl-CoA, which would be methylated in activated methylene groups to yield a bicyclic acid intermediate that could then either be converted to botrylactone derivatives or lose the starter acetate unit through a retro-Claisen type C-C bond cleavage to yield botcinin derivatives. The second polyketide synthase, BOA9, is probably required for the biosynthesis of the tetraketide side chain of botcinins. The methyltransferase (MT) domain within BOA6 is probably responsible for the incorporation of four methyl groups. The trans-enoyl reductase BOA5 might take over the enoyl reductase function of BOA6 that misses an ER domain. The monooxygenases BOA2, BOA3 and BOA4 might be involved in further hydroxylations at C4, C5 and C8, whereas BOA7, close to BOA9, could potentially be involved in the hydroxylation at C4 in the side chain of botcinins. The protein is Oxidoreductase BOA1 of Botryotinia fuckeliana (strain B05.10) (Noble rot fungus).